Here is a 308-residue protein sequence, read N- to C-terminus: tRNA pseudouridine synthase B (308 aa).

The Nucleophile role is filled by Asp48.

The protein belongs to the pseudouridine synthase TruB family. Type 1 subfamily.

The enzyme catalyses uridine(55) in tRNA = pseudouridine(55) in tRNA. Responsible for synthesis of pseudouridine from uracil-55 in the psi GC loop of transfer RNAs. In Histophilus somni (strain 129Pt) (Haemophilus somnus), this protein is tRNA pseudouridine synthase B.